The following is a 241-amino-acid chain: Adenosine 5'-phosphosulfate reductase (241 aa).

Positions 122, 123, 205, and 208 each coordinate [4Fe-4S] cluster. Cysteine 231 acts as the Nucleophile; cysteine thiosulfonate intermediate in catalysis.

The protein belongs to the PAPS reductase family. CysH subfamily. [4Fe-4S] cluster serves as cofactor.

It is found in the cytoplasm. It catalyses the reaction [thioredoxin]-disulfide + sulfite + AMP + 2 H(+) = adenosine 5'-phosphosulfate + [thioredoxin]-dithiol. It functions in the pathway sulfur metabolism; hydrogen sulfide biosynthesis; sulfite from sulfate. Catalyzes the formation of sulfite from adenosine 5'-phosphosulfate (APS) using thioredoxin as an electron donor. The sequence is that of Adenosine 5'-phosphosulfate reductase from Shouchella clausii (strain KSM-K16) (Alkalihalobacillus clausii).